The following is a 21-amino-acid chain: Large ribosomal subunit protein uL10 (21 aa).

The protein belongs to the universal ribosomal protein uL10 family. Part of the ribosomal stalk of the 50S ribosomal subunit. The N-terminus interacts with L11 and the large rRNA to form the base of the stalk. The C-terminus forms an elongated spine to which L12 dimers bind in a sequential fashion forming a multimeric L10(L12)X complex.

In terms of biological role, forms part of the ribosomal stalk, playing a central role in the interaction of the ribosome with GTP-bound translation factors. The polypeptide is Large ribosomal subunit protein uL10 (rplJ) (Bacillus cereus).